The chain runs to 194 residues: Chitin synthase 2 (194 aa).

This sequence belongs to the chitin synthase family. Class III subfamily.

The protein localises to the cell membrane. It catalyses the reaction [(1-&gt;4)-N-acetyl-beta-D-glucosaminyl](n) + UDP-N-acetyl-alpha-D-glucosamine = [(1-&gt;4)-N-acetyl-beta-D-glucosaminyl](n+1) + UDP + H(+). Functionally, polymerizes chitin, a structural polymer of the cell wall and septum, by transferring the sugar moiety of UDP-GlcNAc to the non-reducing end of the growing chitin polymer. This chain is Chitin synthase 2 (CHS2), found in Ajellomyces capsulatus (Darling's disease fungus).